We begin with the raw amino-acid sequence, 170 residues long: Small ribosomal subunit protein uS4 (170 aa).

The S4 RNA-binding domain occupies 100–164; that stretch reads RRLQTVVYRE…SDLTDELHPA (65 aa).

Belongs to the universal ribosomal protein uS4 family. In terms of assembly, part of the 30S ribosomal subunit. Contacts protein S5. The interaction surface between S4 and S5 is involved in control of translational fidelity.

Functionally, one of the primary rRNA binding proteins, it binds directly to 16S rRNA where it nucleates assembly of the body of the 30S subunit. With S5 and S12 plays an important role in translational accuracy. In Halobacterium salinarum (strain ATCC 29341 / DSM 671 / R1), this protein is Small ribosomal subunit protein uS4.